The primary structure comprises 400 residues: NADH-ubiquinone oxidoreductase 49 kDa subunit (400 aa).

Belongs to the complex I 49 kDa subunit family.

It localises to the mitochondrion. The enzyme catalyses a ubiquinone + NADH + 5 H(+)(in) = a ubiquinol + NAD(+) + 4 H(+)(out). In terms of biological role, core subunit of the mitochondrial membrane respiratory chain NADH dehydrogenase (Complex I) that is believed to belong to the minimal assembly required for catalysis. Complex I functions in the transfer of electrons from NADH to the respiratory chain. The immediate electron acceptor for the enzyme is believed to be ubiquinone. Component of the iron-sulfur (IP) fragment of the enzyme. Component of the iron-sulfur (IP) fragment of the enzyme. This is NADH-ubiquinone oxidoreductase 49 kDa subunit (NAD7) from Prototheca wickerhamii.